A 303-amino-acid polypeptide reads, in one-letter code: UDP-3-O-acyl-N-acetylglucosamine deacetylase (303 aa).

Zn(2+)-binding residues include His-78, His-237, and Asp-241. The Proton donor role is filled by His-264.

Belongs to the LpxC family. Zn(2+) is required as a cofactor.

The catalysed reaction is a UDP-3-O-[(3R)-3-hydroxyacyl]-N-acetyl-alpha-D-glucosamine + H2O = a UDP-3-O-[(3R)-3-hydroxyacyl]-alpha-D-glucosamine + acetate. It functions in the pathway glycolipid biosynthesis; lipid IV(A) biosynthesis; lipid IV(A) from (3R)-3-hydroxytetradecanoyl-[acyl-carrier-protein] and UDP-N-acetyl-alpha-D-glucosamine: step 2/6. Functionally, catalyzes the hydrolysis of UDP-3-O-myristoyl-N-acetylglucosamine to form UDP-3-O-myristoylglucosamine and acetate, the committed step in lipid A biosynthesis. The sequence is that of UDP-3-O-acyl-N-acetylglucosamine deacetylase from Pseudomonas entomophila (strain L48).